Here is a 133-residue protein sequence, read N- to C-terminus: Ubiquitin-like FUBI-ribosomal protein eS30 fusion protein (133 aa).

The interval 84–110 (GKVRGQTPKVAKQEKKKKKTGRAKRRM) is disordered. Residues 97-110 (EKKKKKTGRAKRRM) show a composition bias toward basic residues. K125 is modified (N6-succinyllysine).

The protein in the N-terminal section; belongs to the ubiquitin family. This sequence in the C-terminal section; belongs to the eukaryotic ribosomal protein eS30 family. As to quaternary structure, component of the 40S subunit of the ribosome. FUBI is cleaved from ribosomal protein S30 by the deubiquitinase USP36 before the assembly of ribosomal protein S30 into pre-40S ribosomal particles. FUBI removal from ribosomal protein S30 is a crucial event for the final maturation of pre-40S particles.

Its subcellular location is the nucleus. It localises to the cytoplasm. Functionally, may have pro-apoptotic activity. In terms of biological role, component of the 40S subunit of the ribosome. Contributes to the assembly and function of 40S ribosomal subunits. The polypeptide is Ubiquitin-like FUBI-ribosomal protein eS30 fusion protein (Fau) (Mus musculus (Mouse)).